The following is a 384-amino-acid chain: GTPase Obg (384 aa).

An Obg domain is found at 1 to 159; sequence MKFIDEAKIE…RSLQLELKVL (159 aa). Positions 20 to 46 are disordered; the sequence is ATSFRREKFVPRGGPDGGDGGKGGSVW. Residues 33–43 show a composition bias toward gly residues; the sequence is GPDGGDGGKGG. Residues 160-348 enclose the OBG-type G domain; the sequence is ADVGLLGMPN…LVHQINQYLT (189 aa). GTP-binding positions include 166-173, 191-195, 213-216, 284-287, and 329-331; these read GMPNAGKS, FTTLH, DIPG, NKLD, and SAL. Residues Ser-173 and Thr-193 each coordinate Mg(2+).

This sequence belongs to the TRAFAC class OBG-HflX-like GTPase superfamily. OBG GTPase family. Monomer. Mg(2+) serves as cofactor.

Its subcellular location is the cytoplasm. Functionally, an essential GTPase which binds GTP, GDP and possibly (p)ppGpp with moderate affinity, with high nucleotide exchange rates and a fairly low GTP hydrolysis rate. Plays a role in control of the cell cycle, stress response, ribosome biogenesis and in those bacteria that undergo differentiation, in morphogenesis control. This chain is GTPase Obg, found in Neisseria meningitidis serogroup C (strain 053442).